We begin with the raw amino-acid sequence, 562 residues long: Potassium-transporting ATPase potassium-binding subunit (562 aa).

12 consecutive transmembrane segments (helical) span residues 6-26, 63-83, 132-152, 175-195, 253-273, 283-303, 327-347, 356-376, 379-399, 416-436, 483-503, and 526-546; these read FLLI…LGSF, ALAI…LLMM, GLTV…FALI, LYVL…QGVL, FVQM…FGQV, LIWA…YAEL, FGIL…CGAV, ALGG…FGGV, GLYG…LMIG, MTAL…ALAL, LLLA…VLAI, and LFIG…FIPA.

This sequence belongs to the KdpA family. In terms of assembly, the system is composed of three essential subunits: KdpA, KdpB and KdpC.

The protein resides in the cell inner membrane. In terms of biological role, part of the high-affinity ATP-driven potassium transport (or Kdp) system, which catalyzes the hydrolysis of ATP coupled with the electrogenic transport of potassium into the cytoplasm. This subunit binds the periplasmic potassium ions and delivers the ions to the membrane domain of KdpB through an intramembrane tunnel. The polypeptide is Potassium-transporting ATPase potassium-binding subunit (Yersinia enterocolitica serotype O:8 / biotype 1B (strain NCTC 13174 / 8081)).